We begin with the raw amino-acid sequence, 441 residues long: Protein eva-1 homolog C (441 aa).

Positions 1 to 23 (MLLPGRARQPPTPQPVQHPGLRR) are disordered. An N-terminal signal peptide occupies residues 1–48 (MLLPGRARQPPTPQPVQHPGLRRQVEPPGQLLRLFYCTVLVCSKEISA). Topologically, residues 49–322 (LTDFSGYLTK…AYIRAHPERA (274 aa)) are extracellular. Asparagine 62 carries an N-linked (GlcNAc...) asparagine glycan. The 93-residue stretch at 67-159 (ACDGDYLNLQ…KYLLVSFKCQ (93 aa)) folds into the SUEL-type lectin 1 domain. Asparagine 165 carries N-linked (GlcNAc...) asparagine glycosylation. In terms of domain architecture, SUEL-type lectin 2 spans 168 to 260 (VCEDQELKLH…KYLTVTYACV (93 aa)). Residues 323 to 343 (ALLFVSSVCIGLALTLCALVI) form a helical membrane-spanning segment. Over 344–441 (RESCAKDFRD…SLPRNMGQFY (98 aa)) the chain is Cytoplasmic. The tract at residues 362–390 (VPGSDKVEEDSEDEEEEEDPSESDFPGEL) is disordered. Residues 368–383 (VEEDSEDEEEEEDPSE) show a composition bias toward acidic residues.

It belongs to the EVA1 family. Ubiquitous.

It is found in the membrane. Binds heparin. This is Protein eva-1 homolog C (EVA1C) from Homo sapiens (Human).